The following is a 206-amino-acid chain: Octanoyltransferase (206 aa).

One can recognise a BPL/LPL catalytic domain in the interval 30–206 (PETNDEIWLV…EFVTLLNNSI (177 aa)). Substrate-binding positions include 69 to 76 (RGGQVTYH), 137 to 139 (SLG), and 150 to 152 (GIA). The active-site Acyl-thioester intermediate is C168.

The protein belongs to the LipB family.

It localises to the cytoplasm. It catalyses the reaction octanoyl-[ACP] + L-lysyl-[protein] = N(6)-octanoyl-L-lysyl-[protein] + holo-[ACP] + H(+). It functions in the pathway protein modification; protein lipoylation via endogenous pathway; protein N(6)-(lipoyl)lysine from octanoyl-[acyl-carrier-protein]: step 1/2. Functionally, catalyzes the transfer of endogenously produced octanoic acid from octanoyl-acyl-carrier-protein onto the lipoyl domains of lipoate-dependent enzymes. Lipoyl-ACP can also act as a substrate although octanoyl-ACP is likely to be the physiological substrate. The sequence is that of Octanoyltransferase from Francisella tularensis subsp. holarctica (strain FTNF002-00 / FTA).